Reading from the N-terminus, the 275-residue chain is Enoyl-[acyl-carrier-protein] reductase [NADH] FabI (275 aa).

Residues glycine 13, 19 to 20 (SI), 64 to 65 (DV), and valine 92 contribute to the NAD(+) site. Residue alanine 95 participates in substrate binding. Residues tyrosine 145 and tyrosine 155 each act as proton acceptor in the active site. Residues lysine 162 and 191–195 (IRTLA) contribute to the NAD(+) site.

Belongs to the short-chain dehydrogenases/reductases (SDR) family. FabI subfamily. In terms of assembly, homotetramer.

It catalyses the reaction a 2,3-saturated acyl-[ACP] + NAD(+) = a (2E)-enoyl-[ACP] + NADH + H(+). Its pathway is lipid metabolism; fatty acid biosynthesis. Catalyzes the reduction of a carbon-carbon double bond in an enoyl moiety that is covalently linked to an acyl carrier protein (ACP). Involved in the elongation cycle of fatty acid which are used in the lipid metabolism. The chain is Enoyl-[acyl-carrier-protein] reductase [NADH] FabI (fabI) from Helicobacter pylori (strain ATCC 700392 / 26695) (Campylobacter pylori).